The sequence spans 145 residues: Putative pre-16S rRNA nuclease (145 aa).

This sequence belongs to the YqgF nuclease family.

It localises to the cytoplasm. Could be a nuclease involved in processing of the 5'-end of pre-16S rRNA. The sequence is that of Putative pre-16S rRNA nuclease from Microcystis aeruginosa (strain NIES-843 / IAM M-2473).